The following is a 604-amino-acid chain: Kelch-like protein 15 (604 aa).

A BTB domain is found at 31 to 98 (LDVTLLIEEH…MYYGSLELSM (68 aa)). Residues 133–237 (CAEVMRLLED…TPANIFEKVK (105 aa)) form the BACK domain. Kelch repeat units follow at residues 328 to 379 (FAFL…VIGK), 381 to 426 (IYAV…VLNG), 428 to 473 (LYIT…NKSK), 489 to 542 (KLYV…VLDK), and 544 to 592 (IMVL…SLHF).

The protein resides in the nucleus. It functions in the pathway protein modification; protein ubiquitination. Functionally, substrate-specific adapter for an E3 ubiquitin-protein ligase complex. This Danio rerio (Zebrafish) protein is Kelch-like protein 15 (klhl15).